We begin with the raw amino-acid sequence, 740 residues long: Folic acid synthesis protein fol1 (740 aa).

DHNA stretches follow at residues 39 to 160 and 161 to 280; these read DLIH…REID and DQFF…SCFS. Positions 291–449 are HPPK; sequence IDNEAVYISL…EKIVDHDIKP (159 aa). A Pterin-binding domain is found at 471–730; it reads TYIMAILNLT…DVYEMYKISK (260 aa). The segment at 473 to 740 is DHPS; that stretch reads IMAILNLTPD…MSDAIWKEIY (268 aa). Residue asparagine 478 coordinates Mg(2+). (7,8-dihydropterin-6-yl)methyl diphosphate is bound by residues threonine 517, aspartate 552, asparagine 571, aspartate 643, lysine 683, and 718 to 720; that span reads RVH.

In the N-terminal section; belongs to the DHNA family. This sequence in the central section; belongs to the HPPK family. The protein in the C-terminal section; belongs to the DHPS family. The cofactor is Mg(2+).

The catalysed reaction is 7,8-dihydroneopterin = 6-hydroxymethyl-7,8-dihydropterin + glycolaldehyde. It carries out the reaction 6-hydroxymethyl-7,8-dihydropterin + ATP = (7,8-dihydropterin-6-yl)methyl diphosphate + AMP + H(+). The enzyme catalyses (7,8-dihydropterin-6-yl)methyl diphosphate + 4-aminobenzoate = 7,8-dihydropteroate + diphosphate. Its pathway is cofactor biosynthesis; tetrahydrofolate biosynthesis; 2-amino-4-hydroxy-6-hydroxymethyl-7,8-dihydropteridine diphosphate from 7,8-dihydroneopterin triphosphate: step 3/4. It functions in the pathway cofactor biosynthesis; tetrahydrofolate biosynthesis; 2-amino-4-hydroxy-6-hydroxymethyl-7,8-dihydropteridine diphosphate from 7,8-dihydroneopterin triphosphate: step 4/4. It participates in cofactor biosynthesis; tetrahydrofolate biosynthesis; 7,8-dihydrofolate from 2-amino-4-hydroxy-6-hydroxymethyl-7,8-dihydropteridine diphosphate and 4-aminobenzoate: step 1/2. Catalyzes three sequential steps of tetrahydrofolate biosynthesis. The sequence is that of Folic acid synthesis protein fol1 (fol1) from Pneumocystis carinii.